Consider the following 377-residue polypeptide: MAAMWRAAARQLVDRAVGSRAAHTSAGSKKIVGVFYQAGEYADKNPNFVGCVEGALGIRDWLESKGHHYIVTDDKEGFNSELEKHIEDMHVLITTPFHPAYVTAEKIKKAKTPELLLTAGIGSDHIDLPAAAAAGLTVARVTGSNTVSVAEDELMRILILLRNFLPGYQQVVKGEWNVAGIAHRAYDLEGKTVGTVGAGRYGRLLLQRLKPFNCNLLYHDRLQINPELEKEIGAKFEEDLDAMLPKCDVVVINTPLTEKTRGMFNKEKIAKMKKGVIIVNNARGAIMDTQAVADACSSGHIAGYGGDVWFPQPAPKDHPWRYMPNHAMTPHISGTTIDAQLRYAAGVKDMLDRYFKGEEFPVENYIVKEGELASQYK.

Residues 1-29 (MAAMWRAAARQLVDRAVGSRAAHTSAGSK) constitute a mitochondrion transit peptide. Substrate contacts are provided by Ile-121 and Asn-145. Residues Thr-146, Asp-220, 255–259 (PLTEK), Asn-281, Asp-307, and 331–334 (HISG) each bind NAD(+).

This sequence belongs to the D-isomer specific 2-hydroxyacid dehydrogenase family. FDH subfamily. In terms of assembly, homodimer.

It localises to the mitochondrion. It catalyses the reaction formate + NAD(+) = CO2 + NADH. Its function is as follows. Catalyzes the NAD(+)-dependent oxidation of formate to carbon dioxide. Involved in the cell stress response. The protein is Formate dehydrogenase, mitochondrial of Hordeum vulgare (Barley).